The following is a 602-amino-acid chain: Laccase 1 (602 aa).

The first 20 residues, 1 to 20 (MDHFARVSLVAALLYTNTWA), serve as a signal peptide directing secretion. 2 Plastocyanin-like domains span residues 30-128 (TWEE…VRPK) and 157-345 (YLVV…RIPN). Cu cation is bound by residues histidine 78, histidine 80, histidine 108, and histidine 110. Residues asparagine 176, asparagine 241, asparagine 264, asparagine 388, asparagine 430, asparagine 454, and asparagine 470 are each glycosylated (N-linked (GlcNAc...) asparagine). A Plastocyanin-like 3 domain is found at 461–584 (NEGLLLRTRN…GGMGMVIMDG (124 aa)). Cu cation is bound by residues histidine 492, histidine 495, and histidine 497. N-linked (GlcNAc...) asparagine glycosylation occurs at asparagine 512. Positions 566, 567, 568, and 572 each coordinate Cu cation.

Belongs to the multicopper oxidase family. It depends on Cu cation as a cofactor.

Its subcellular location is the cell surface. The protein operates within pigment biosynthesis. Its function is as follows. Laccase; part of the Pks1 gene cluster that mediates the biosynthesis of an anthraquinone derivative pigment that contributes to conidial pigmentation that provides protection from UV radiation, heat and cold stress. The polyketide synthase Pks1 produces 1-acetyl-2,4,6,8-tetrahydroxy-9,10-anthraquinone though condensation of acetyl-CoA with malonyl-CoA. The dehydratase EthD and the laccase Mlac1 further convert the anthraquinone derivative into the final conidial pigment. This chain is Laccase 1, found in Metarhizium album (strain ARSEF 1941).